Reading from the N-terminus, the 357-residue chain is uncharacterized protein (357 aa).

The next 3 helical transmembrane spans lie at 21–41, 86–106, and 135–155; these read FIKI…LFSW, FFCL…CTLF, and GGFV…PVIF. Disordered regions lie at residues 184–229 and 283–357; these read DKNK…AMSD and KAGS…NKRN. Positions 195–223 are enriched in low complexity; sequence TTNTTNFSGNGSSSSTTNATSSSSSQANN. Composition is skewed to basic and acidic residues over residues 305–314 and 322–337; these read KIEEYDNQKQ and KETN…EKET. The stretch at 305–337 forms a coiled coil; the sequence is KIEEYDNQKQEEEENEEKETNKQQTQKDDEKET. Over residues 346–357 the composition is skewed to basic residues; sequence KKSKKGKKNKRN.

The protein localises to the membrane. This is an uncharacterized protein from Dictyostelium discoideum (Social amoeba).